A 321-amino-acid chain; its full sequence is Transaldolase (321 aa).

The Schiff-base intermediate with substrate role is filled by Lys132.

The protein belongs to the transaldolase family. Type 1 subfamily. In terms of assembly, homodimer.

It is found in the cytoplasm. The enzyme catalyses D-sedoheptulose 7-phosphate + D-glyceraldehyde 3-phosphate = D-erythrose 4-phosphate + beta-D-fructose 6-phosphate. It participates in carbohydrate degradation; pentose phosphate pathway; D-glyceraldehyde 3-phosphate and beta-D-fructose 6-phosphate from D-ribose 5-phosphate and D-xylulose 5-phosphate (non-oxidative stage): step 2/3. Functionally, transaldolase is important for the balance of metabolites in the pentose-phosphate pathway. The chain is Transaldolase from Rhizobium etli (strain ATCC 51251 / DSM 11541 / JCM 21823 / NBRC 15573 / CFN 42).